Here is a 310-residue protein sequence, read N- to C-terminus: MKNNTGYIIGAYPCAPSFHQKSEEEETEFWRQLSDTPDIRGLEQPCLEHLHPLGDEWLLRHTPGNWQIVVTAIMETMRRRSENGGFGLASSDEEQRKACVEYYRHLYQKINKINGNNTGKVIALELHAAPLAGNPNVAQATDAFARSLKEIANWDWSCDLVLEHCDAMTGPAPRKGFLPLVNVLETIADYDISVCINWARSAIEGRDTSLPLIHTQQAKQAGKLGALMFSGTTLDGEYGEWQDLHAPFAPFCPQSLMTEKHVKELITAAAPELLQFTGIKLLEINASADINHRINILRDGINMMKKATRR.

Belongs to the YiaX1 family.

This is an uncharacterized protein from Salmonella typhimurium (strain LT2 / SGSC1412 / ATCC 700720).